The primary structure comprises 293 residues: Energy-coupling factor transporter ATP-binding protein EcfA2 (293 aa).

The ABC transporter domain occupies 3–246 (ITFQKVEHRY…ADELEKIGVD (244 aa)). 40–47 (GHTGSGKS) contributes to the ATP binding site.

The protein belongs to the ABC transporter superfamily. Energy-coupling factor EcfA family. In terms of assembly, forms a stable energy-coupling factor (ECF) transporter complex composed of 2 membrane-embedded substrate-binding proteins (S component), 2 ATP-binding proteins (A component) and 2 transmembrane proteins (T component).

The protein resides in the cell membrane. Its function is as follows. ATP-binding (A) component of a common energy-coupling factor (ECF) ABC-transporter complex. Unlike classic ABC transporters this ECF transporter provides the energy necessary to transport a number of different substrates. The sequence is that of Energy-coupling factor transporter ATP-binding protein EcfA2 from Bacillus cereus (strain ZK / E33L).